The chain runs to 403 residues: Glucose/galactose-binding lipoprotein (403 aa).

A signal peptide spans 1 to 25 (MKENSCTACSRRLALFVGAAVLVVG). The N-palmitoyl cysteine moiety is linked to residue cysteine 26. Cysteine 26 carries S-diacylglycerol cysteine lipidation.

Belongs to the bacterial solute-binding protein 2 family.

Its subcellular location is the cell membrane. Its function is as follows. May be involved in the transport of sugars. May have a role in chemotaxis. This Treponema pallidum (strain Nichols) protein is Glucose/galactose-binding lipoprotein (mglB).